Here is a 423-residue protein sequence, read N- to C-terminus: Gamma-glutamyl phosphate reductase (423 aa).

This sequence belongs to the gamma-glutamyl phosphate reductase family.

Its subcellular location is the cytoplasm. The catalysed reaction is L-glutamate 5-semialdehyde + phosphate + NADP(+) = L-glutamyl 5-phosphate + NADPH + H(+). Its pathway is amino-acid biosynthesis; L-proline biosynthesis; L-glutamate 5-semialdehyde from L-glutamate: step 2/2. Catalyzes the NADPH-dependent reduction of L-glutamate 5-phosphate into L-glutamate 5-semialdehyde and phosphate. The product spontaneously undergoes cyclization to form 1-pyrroline-5-carboxylate. This chain is Gamma-glutamyl phosphate reductase, found in Burkholderia orbicola (strain AU 1054).